The primary structure comprises 321 residues: 2,3,4,5-tetrahydropyridine-2,6-dicarboxylate N-succinyltransferase (321 aa).

Asp166 and Glu183 together coordinate Mg(2+). Residue Glu199 is the Acyl-anhydride intermediate of the active site. Succinyl-CoA is bound by residues Arg201, Gly216, Ser219, Ala242, Glu257–Ala258, Gly265, Lys281, and Arg294–Ser297.

The protein belongs to the type 2 tetrahydrodipicolinate N-succinyltransferase family. As to quaternary structure, homotrimer.

It is found in the cytoplasm. The enzyme catalyses (S)-2,3,4,5-tetrahydrodipicolinate + succinyl-CoA + H2O = (S)-2-succinylamino-6-oxoheptanedioate + CoA. It functions in the pathway amino-acid biosynthesis; L-lysine biosynthesis via DAP pathway; LL-2,6-diaminopimelate from (S)-tetrahydrodipicolinate (succinylase route): step 1/3. Its function is as follows. Catalyzes the conversion of the cyclic tetrahydrodipicolinate (THDP) into the acyclic N-succinyl-L-2-amino-6-oxopimelate using succinyl-CoA. The protein is 2,3,4,5-tetrahydropyridine-2,6-dicarboxylate N-succinyltransferase of Rothia mucilaginosa (strain DY-18) (Stomatococcus mucilaginosus).